The following is a 252-amino-acid chain: UPF0246 protein Fjoh_4905 (252 aa).

This sequence belongs to the UPF0246 family.

The polypeptide is UPF0246 protein Fjoh_4905 (Flavobacterium johnsoniae (strain ATCC 17061 / DSM 2064 / JCM 8514 / BCRC 14874 / CCUG 350202 / NBRC 14942 / NCIMB 11054 / UW101) (Cytophaga johnsonae)).